A 292-amino-acid chain; its full sequence is RNA 5'-monophosphate methyltransferase (292 aa).

Residues 1–20 (MAVPTELHGGSVKETAAEKE) are disordered. Residues arginine 46, asparagine 76, aspartate 110, 135–136 (DF), and methionine 164 each bind S-adenosyl-L-methionine. The Bin3-type SAM domain occupies 53-274 (ELLRQLFPES…KQTIETHPIP (222 aa)).

This sequence belongs to the methyltransferase superfamily. In terms of assembly, interacts with DICER1; the interaction may be mediated by RNA.

Its subcellular location is the cytoplasm. It catalyses the reaction a 5'-end 5'-phospho-ribonucleoside-RNA + S-adenosyl-L-methionine = a 5'-end (5'-methylphospho)-ribonucleoside-RNA + S-adenosyl-L-homocysteine. The catalysed reaction is a 5'-end 5'-phospho-ribonucleoside-RNA + 2 S-adenosyl-L-methionine = a 5'-end (5'-bismethylphospho)-ribonucleoside-RNA + 2 S-adenosyl-L-homocysteine. O-methyltransferase that specifically monomethylates 5'-monophosphate of cytoplasmic histidyl tRNA (tRNA(His)), acting as a capping enzyme by protecting tRNA(His) from cleavage by DICER1. Also able, with less efficiently, to methylate the 5' monophosphate of a subset of pre-miRNAs, acting as a negative regulator of miRNA processing. The 5' monophosphate of pre-miRNAs is recognized by DICER1 and is required for pre-miRNAs processing: methylation at this position reduces the processing of pre-miRNAs by DICER1. Was also reported to mediate dimethylation of pre-miR-145; however dimethylation cannot be reproduced by another group which observes a monomethylation of pre-miR-145. This Pongo abelii (Sumatran orangutan) protein is RNA 5'-monophosphate methyltransferase (BCDIN3D).